Here is a 135-residue protein sequence, read N- to C-terminus: Large ribosomal subunit protein bL19 (135 aa).

The protein belongs to the bacterial ribosomal protein bL19 family.

Its function is as follows. This protein is located at the 30S-50S ribosomal subunit interface and may play a role in the structure and function of the aminoacyl-tRNA binding site. The chain is Large ribosomal subunit protein bL19 from Protochlamydia amoebophila (strain UWE25).